The sequence spans 335 residues: UPF0324 membrane protein gbs1193 (335 aa).

9 helical membrane passes run 20–42 (SWLL…IGII), 57–79 (IAFT…LNLM), 84–106 (VGIS…AYVL), 116–138 (IATL…TAPV), 151–173 (SVIF…FIGL), 210–232 (GATI…LSIY), 253–275 (VLYF…SLRI), 285–304 (FFIV…SKLI), and 311–333 (ILLG…AILG).

Belongs to the UPF0324 family.

The protein localises to the cell membrane. The protein is UPF0324 membrane protein gbs1193 of Streptococcus agalactiae serotype III (strain NEM316).